The following is a 492-amino-acid chain: NADH-ubiquinone oxidoreductase chain 4 (492 aa).

The next 15 membrane-spanning stretches (helical) occupy residues 9–29 (LILTSLTPLIGVFILLLIPSA), 36–56 (NFALWISCLTFLFSLLLWIQF), 63–83 (FQFSTTFLWFPFFNLYYTIGI), 86–106 (ISLFFILLTTLLIISCILVSW), 115–135 (DYLICFLILEFLLIQVFSVLD), 136–156 (LLLFYIYFESVLIPMFLIVGV), 170–190 (FFLYTLIGSLLMLLALLNIYF), 211–231 (IFLWLSFFASFAVKIPMIPFH), 242–262 (PTAGSVILAGILLKMGGYGFL), 269–289 (FPVASIFFTPFIFTLSLVAII), 304–324 (IIAYSSVSHMGFVTIGIFSLN), 332–352 (ILLMLSHGLVSSALFLCIGVL), 370–390 (VMPLFGVFFLFFTFANLGFPG), 410–430 (TLTLFASLGMIFGAAYSIWLF), and 454–474 (FWILIPLAILILWMGIYPNSF).

It belongs to the complex I subunit 4 family.

It is found in the mitochondrion membrane. It catalyses the reaction a ubiquinone + NADH + 5 H(+)(in) = a ubiquinol + NAD(+) + 4 H(+)(out). Core subunit of the mitochondrial membrane respiratory chain NADH dehydrogenase (Complex I) that is believed to belong to the minimal assembly required for catalysis. Complex I functions in the transfer of electrons from NADH to the respiratory chain. The immediate electron acceptor for the enzyme is believed to be ubiquinone. The protein is NADH-ubiquinone oxidoreductase chain 4 (ND4) of Chondrus crispus (Carrageen Irish moss).